We begin with the raw amino-acid sequence, 552 residues long: MDRKVAREFRHKVDFLIENDAEKDYLYDVLRMYHQTMDVAVLVGDLKLVINEPSRLPLFDAIRPLIPLKHQVEYDQLTPRRSRKLKEVRLDRLHPEGLGLSVRGGLEFGCGLFISHLIKGGQADSVGLQVGDEIVRINGYSISSCTHEEVINLIRTKKTVSIKVRHIGLIPVKSSPDEPLTWQYVDQFVSESGGVRGSLGSPGNRENKEKKVFISLVGSRGLGCSISSGPIQKPGIFISHVKPGSLSAEVGLEIGDQIVEVNGVDFSNLDHKEAVNVLKSSRSLTISIVAAAGRELFMTDRERLAEARQRELQRQELLMQKRLAMESNKILQEQQEMERQRRKEIAQKAAEENERYRKEMEQIVEEEEKFKKQWEEDWGSKEQLLLPKTITAEVHPVPLRKPKYDQGVEPELEPADDLDGGTEEQGEQDFRKYEEGFDPYSMFTPEQIMGKDVRLLRIKKEGSLDLALEGGVDSPIGKVVVSAVYERGAAERHGGIVKGDEIMAINGKIVTDYTLAEAEAALQKAWNQGGDWIDLVVAVCPPKEYDDELTFF.

Residues 1–86 are N-terminal domain; that stretch reads MDRKVAREFR…LTPRRSRKLK (86 aa). 2 PDZ domains span residues 87-169 and 211-293; these read EVRL…HIGL and KVFI…AAAG. The interval 194-552 is mediates interaction with MYO7B; it reads GVRGSLGSPG…KEYDDELTFF (359 aa). Position 219 is a phosphoserine (S219). The stretch at 310–377 forms a coiled coil; it reads RELQRQELLM…EKFKKQWEED (68 aa). Residues 401 to 427 are disordered; it reads KPKYDQGVEPELEPADDLDGGTEEQGE. Residues 408–427 show a composition bias toward acidic residues; sequence VEPELEPADDLDGGTEEQGE. In terms of domain architecture, PDZ 3 spans 452–537; sequence DVRLLRIKKE…QGGDWIDLVV (86 aa).

As to quaternary structure, part of the IMAC/intermicrovillar adhesion complex/intermicrovillar tip-link complex composed of ANKS4B, MYO7B, USH1C, CDHR2 and CDHR5. Part of a complex composed of USH1C, USH1G and MYO7A. Interacts with F-actin. Interacts with USH2A. Interacts with SLC4A7. Interacts (via PDZ1 domain) with the C-terminus of USHBP1. Interacts (via N-terminus and PDZ 2 domain) with CDH23. Interacts with USH1G. Interacts with MYO7B. Interacts with CDHR2 and CDHR5; may mediate their interaction with MYO7B at the microvilli tip. Interacts (via PDZ 1 domain) with ANKS4B. Interacts (via PDZ 1 domain) with DOCK4. In terms of tissue distribution, expressed in small intestine, colon, kidney, eye and weakly in pancreas. Expressed also in vestibule of the inner ear.

The protein localises to the cytoplasm. The protein resides in the cytosol. It localises to the cytoskeleton. Its subcellular location is the cell projection. It is found in the microvillus. In terms of biological role, anchoring/scaffolding protein that is a part of the functional network formed by USH1C, USH1G, CDH23 and MYO7A that mediates mechanotransduction in cochlear hair cells. Required for normal development and maintenance of cochlear hair cell bundles. As part of the intermicrovillar adhesion complex/IMAC plays a role in brush border differentiation, controlling microvilli organization and length. Probably plays a central regulatory role in the assembly of the complex, recruiting CDHR2, CDHR5 and MYO7B to the microvilli tips. This is Harmonin (USH1C) from Homo sapiens (Human).